The primary structure comprises 804 residues: Leucine--tRNA ligase (804 aa).

The 'HIGH' region signature appears at 40–51 (PYPSGAGLHVGH). Positions 576–580 (KMSKS) match the 'KMSKS' region motif. K579 provides a ligand contact to ATP.

Belongs to the class-I aminoacyl-tRNA synthetase family.

The protein resides in the cytoplasm. It carries out the reaction tRNA(Leu) + L-leucine + ATP = L-leucyl-tRNA(Leu) + AMP + diphosphate. The sequence is that of Leucine--tRNA ligase from Staphylococcus aureus (strain Mu3 / ATCC 700698).